We begin with the raw amino-acid sequence, 209 residues long: dITP/XTP pyrophosphatase (209 aa).

Substrate is bound at residue 7 to 12; that stretch reads SSHGYK. D70 acts as the Proton acceptor in catalysis. D70 is a binding site for Mg(2+). Substrate-binding positions include S71, 154-157, K177, and 182-183; these read FGYD and HR.

Belongs to the HAM1 NTPase family. In terms of assembly, homodimer. The cofactor is Mg(2+).

It catalyses the reaction XTP + H2O = XMP + diphosphate + H(+). It carries out the reaction dITP + H2O = dIMP + diphosphate + H(+). The catalysed reaction is ITP + H2O = IMP + diphosphate + H(+). Pyrophosphatase that catalyzes the hydrolysis of nucleoside triphosphates to their monophosphate derivatives, with a high preference for the non-canonical purine nucleotides XTP (xanthosine triphosphate), dITP (deoxyinosine triphosphate) and ITP. Seems to function as a house-cleaning enzyme that removes non-canonical purine nucleotides from the nucleotide pool, thus preventing their incorporation into DNA/RNA and avoiding chromosomal lesions. This is dITP/XTP pyrophosphatase from Chlamydia muridarum (strain MoPn / Nigg).